The sequence spans 495 residues: Formin-like protein 17 (495 aa).

A disordered region spans residues 1-92; it reads MDIRELIDIT…HNLKGQGQTR (92 aa). A compositionally biased stretch (pro residues) spans 19 to 29; it reads GPPPPPPPPLL. The span at 30–39 shows a compositional bias: low complexity; sequence QPHHSALSSS. Positions 86–486 constitute an FH2 domain; that stretch reads KGQGQTRKAN…RAQKEAENEK (401 aa).

Belongs to the formin-like family. Class-II subfamily.

The polypeptide is Formin-like protein 17 (FH17) (Arabidopsis thaliana (Mouse-ear cress)).